A 284-amino-acid chain; its full sequence is GPN-loop GTPase 3 (284 aa).

Residue 13-18 coordinates GTP; that stretch reads GSGKST. Positions 72–74 match the Gly-Pro-Asn (GPN)-loop; involved in dimer interface motif; it reads GPN. 174–177 provides a ligand contact to GTP; sequence TKMD. Positions 262-284 are disordered; the sequence is EPREHEEESSSMFDEYFQERQNE.

This sequence belongs to the GPN-loop GTPase family. Heterodimer with GPN1. Binds to RNA polymerase II (RNAPII). Interacts directly with subunits RPB4 and RPB7 and the CTD of RPB1.

Small GTPase required for proper localization of RNA polymerase II (RNAPII). May act at an RNAP assembly step prior to nuclear import. In Mus musculus (Mouse), this protein is GPN-loop GTPase 3.